Here is a 578-residue protein sequence, read N- to C-terminus: Proline--tRNA ligase (578 aa).

Belongs to the class-II aminoacyl-tRNA synthetase family. ProS type 1 subfamily. As to quaternary structure, homodimer.

The protein resides in the cytoplasm. The enzyme catalyses tRNA(Pro) + L-proline + ATP = L-prolyl-tRNA(Pro) + AMP + diphosphate. Catalyzes the attachment of proline to tRNA(Pro) in a two-step reaction: proline is first activated by ATP to form Pro-AMP and then transferred to the acceptor end of tRNA(Pro). As ProRS can inadvertently accommodate and process non-cognate amino acids such as alanine and cysteine, to avoid such errors it has two additional distinct editing activities against alanine. One activity is designated as 'pretransfer' editing and involves the tRNA(Pro)-independent hydrolysis of activated Ala-AMP. The other activity is designated 'posttransfer' editing and involves deacylation of mischarged Ala-tRNA(Pro). The misacylated Cys-tRNA(Pro) is not edited by ProRS. This Burkholderia vietnamiensis (strain G4 / LMG 22486) (Burkholderia cepacia (strain R1808)) protein is Proline--tRNA ligase.